The chain runs to 443 residues: Probable glycine dehydrogenase (decarboxylating) subunit 1 (443 aa).

It belongs to the GcvP family. N-terminal subunit subfamily. In terms of assembly, the glycine cleavage system is composed of four proteins: P, T, L and H. In this organism, the P 'protein' is a heterodimer of two subunits.

The enzyme catalyses N(6)-[(R)-lipoyl]-L-lysyl-[glycine-cleavage complex H protein] + glycine + H(+) = N(6)-[(R)-S(8)-aminomethyldihydrolipoyl]-L-lysyl-[glycine-cleavage complex H protein] + CO2. Functionally, the glycine cleavage system catalyzes the degradation of glycine. The P protein binds the alpha-amino group of glycine through its pyridoxal phosphate cofactor; CO(2) is released and the remaining methylamine moiety is then transferred to the lipoamide cofactor of the H protein. The protein is Probable glycine dehydrogenase (decarboxylating) subunit 1 of Nitratidesulfovibrio vulgaris (strain ATCC 29579 / DSM 644 / CCUG 34227 / NCIMB 8303 / VKM B-1760 / Hildenborough) (Desulfovibrio vulgaris).